The following is a 91-amino-acid chain: Hepcidin-1 (91 aa).

A signal peptide spans 1-24 (MKLSNVFLAAVVILTCVCVFQITA). Residues 25-64 (VPFIQQVQDEHHVESEELQENQHLTEAEHRQTDPLVLFRT) constitute a propeptide that is removed on maturation. 4 disulfide bridges follow: C73-C89, C76-C79, C77-C85, and C80-C88.

This sequence belongs to the hepcidin family.

It is found in the secreted. Seems to act as a signaling molecule involved in the maintenance of iron homeostasis. Seems to be required in conjunction with HFE to regulate both intestinal iron absorption and iron storage in macrophages. May also have antimicrobial activity. The chain is Hepcidin-1 (hamp1) from Danio rerio (Zebrafish).